The sequence spans 454 residues: Carbamoyl phosphate synthase arginine-specific small chain (454 aa).

The transit peptide at 1–29 (MMFSRFFKAVPARAPAFSSPLPVYQARTM) directs the protein to the mitochondrion. The 188-residue stretch at 219-406 (HVAVLDCGVK…IDSVKKYKNS (188 aa)) folds into the Glutamine amidotransferase type-1 domain. Cys295 serves as the catalytic Nucleophile. Catalysis depends on residues His379 and Glu381.

It belongs to the CarA family. Heterodimer composed of 2 chains; the small (or glutamine) chain promotes the hydrolysis of glutamine to ammonia, which is used by the large (or ammonia) chain to synthesize carbamoyl phosphate.

The protein localises to the mitochondrion matrix. It catalyses the reaction hydrogencarbonate + L-glutamine + 2 ATP + H2O = carbamoyl phosphate + L-glutamate + 2 ADP + phosphate + 2 H(+). The enzyme catalyses L-glutamine + H2O = L-glutamate + NH4(+). It participates in amino-acid biosynthesis; L-arginine biosynthesis; carbamoyl phosphate from bicarbonate: step 1/1. In terms of biological role, small subunit of the arginine-specific carbamoyl phosphate synthase (CPSase). CPSase catalyzes the formation of carbamoyl phosphate from the ammonia moiety of glutamine, carbonate, and phosphate donated by ATP, the first step of the arginine biosynthetic pathway. The small subunit (glutamine amidotransferase) binds and cleaves glutamine to supply the large subunit with the substrate ammonia. The protein is Carbamoyl phosphate synthase arginine-specific small chain (cpa-1) of Emericella nidulans (strain FGSC A4 / ATCC 38163 / CBS 112.46 / NRRL 194 / M139) (Aspergillus nidulans).